The sequence spans 647 residues: UvrABC system protein C (647 aa).

A GIY-YIG domain is found at 16-95 (VEPGVYRFRD…IKEFDPRFNV (80 aa)). The region spanning 208–243 (DRYARELEQQMNAAAENLDFERAARLRDDRSALKRA) is the UVR domain.

Belongs to the UvrC family. In terms of assembly, interacts with UvrB in an incision complex.

The protein resides in the cytoplasm. Functionally, the UvrABC repair system catalyzes the recognition and processing of DNA lesions. UvrC both incises the 5' and 3' sides of the lesion. The N-terminal half is responsible for the 3' incision and the C-terminal half is responsible for the 5' incision. The polypeptide is UvrABC system protein C (Mycobacterium marinum (strain ATCC BAA-535 / M)).